A 732-amino-acid polypeptide reads, in one-letter code: Translation initiation factor IF-2 (732 aa).

The disordered stretch occupies residues 40 to 147; it reads PEVVEKLDHT…QQEQPMKKEK (108 aa). Residues 42-67 are compositionally biased toward basic and acidic residues; it reads VVEKLDHTYNKKNERPQASAPKEKQK. The segment covering 90-103 has biased composition (basic residues); it reads KVPKKKSANKKKEG. Positions 104–117 are enriched in basic and acidic residues; sequence KKHDLQLQQQEKKI. The segment covering 118-129 has biased composition (basic residues); sequence FHQQKKKIKGKA. Residues 233–402 form the tr-type G domain; it reads ERPPVVTIMG…LLVSEMEELK (170 aa). The interval 242–249 is G1; sequence GHVDHGKT. Residue 242 to 249 coordinates GTP; the sequence is GHVDHGKT. A G2 region spans residues 267-271; sequence GITQH. Positions 288-291 are G3; the sequence is DTPG. Residues 288-292 and 342-345 contribute to the GTP site; these read DTPGH and NKMD. Residues 342–345 are G4; sequence NKMD. A G5 region spans residues 378–380; it reads SAK.

It belongs to the TRAFAC class translation factor GTPase superfamily. Classic translation factor GTPase family. IF-2 subfamily.

It localises to the cytoplasm. In terms of biological role, one of the essential components for the initiation of protein synthesis. Protects formylmethionyl-tRNA from spontaneous hydrolysis and promotes its binding to the 30S ribosomal subunits. Also involved in the hydrolysis of GTP during the formation of the 70S ribosomal complex. In Geobacillus sp. (strain WCH70), this protein is Translation initiation factor IF-2.